Here is a 554-residue protein sequence, read N- to C-terminus: Intraflagellar transport protein 56 (554 aa).

Residues methionine 1–glycine 24 form a disordered region. TPR repeat units follow at residues glutamate 57–asparagine 90, glutamate 92–arginine 125, threonine 151–tyrosine 184, and alanine 468–arginine 501.

The protein belongs to the IFT56 family. As to quaternary structure, component of the IFT complex B. Interacts with IFT46; the interaction is direct.

The protein localises to the cell projection. It is found in the cilium. Component of the intraflagellar transport (IFT) complex B required for transport of proteins in the motile cilium. Required for transport of specific ciliary cargo proteins related to motility, while it is neither required for IFT complex B assembly or motion nor for cilium assembly. Required for efficient coupling between the accumulation of GLI2 and GLI3 at the ciliary tips and their dissociation from the negative regulator SUFU. Plays a key role in maintaining the integrity of the IFT complex B and the proper ciliary localization of the IFT complex B components. Not required for IFT complex A ciliary localization or function. Essential for maintaining proper microtubule organization within the ciliary axoneme. The polypeptide is Intraflagellar transport protein 56 (Homo sapiens (Human)).